Here is a 49-residue protein sequence, read N- to C-terminus: Large ribosomal subunit protein bL33A (49 aa).

Belongs to the bacterial ribosomal protein bL33 family.

This Bacillus cytotoxicus (strain DSM 22905 / CIP 110041 / 391-98 / NVH 391-98) protein is Large ribosomal subunit protein bL33A.